Reading from the N-terminus, the 155-residue chain is UPF0260 protein Smed_0627 (155 aa).

This sequence belongs to the UPF0260 family.

This is UPF0260 protein Smed_0627 from Sinorhizobium medicae (strain WSM419) (Ensifer medicae).